The chain runs to 307 residues: Probable aspartoacylase (307 aa).

Zn(2+) contacts are provided by His13 and Glu16. Residues Arg55 and 62 to 63 each bind substrate; that span reads NR. His105 contributes to the Zn(2+) binding site. 2 residues coordinate substrate: Glu163 and Tyr276.

It belongs to the AspA/AstE family. Aspartoacylase subfamily. Zn(2+) is required as a cofactor.

It catalyses the reaction an N-acyl-L-aspartate + H2O = a carboxylate + L-aspartate. In Prochlorococcus marinus (strain SARG / CCMP1375 / SS120), this protein is Probable aspartoacylase.